The sequence spans 204 residues: 3-isopropylmalate dehydratase small subunit (204 aa).

This sequence belongs to the LeuD family. LeuD type 1 subfamily. In terms of assembly, heterodimer of LeuC and LeuD.

The catalysed reaction is (2R,3S)-3-isopropylmalate = (2S)-2-isopropylmalate. Its pathway is amino-acid biosynthesis; L-leucine biosynthesis; L-leucine from 3-methyl-2-oxobutanoate: step 2/4. Its function is as follows. Catalyzes the isomerization between 2-isopropylmalate and 3-isopropylmalate, via the formation of 2-isopropylmaleate. The sequence is that of 3-isopropylmalate dehydratase small subunit from Roseiflexus castenholzii (strain DSM 13941 / HLO8).